Here is a 577-residue protein sequence, read N- to C-terminus: Monooxygenase PC-14 (577 aa).

This sequence belongs to the FMO family. FAD serves as cofactor.

It functions in the pathway secondary metabolite biosynthesis. Monooxygenase; part of the gene cluster that mediates the biosynthesis of the indole diterpenes penitrems. The geranylgeranyl diphosphate (GGPP) synthase penG catalyzes the first step in penitrem biosynthesis via conversion of farnesyl pyrophosphate and isopentyl pyrophosphate into geranylgeranyl pyrophosphate (GGPP). Condensation of indole-3-glycerol phosphate with GGPP by the prenyl transferase penC then forms 3-geranylgeranylindole (3-GGI). Epoxidation by the FAD-dependent monooxygenase penM leads to a epoxidized-GGI that is substrate of the terpene cyclase penB for cyclization to yield paspaline. Paspaline is subsequently converted to 13-desoxypaxilline by the cytochrome P450 monooxygenase penP, the latter being then converted to paxilline by the cytochrome P450 monooxygenase penQ. Paxilline is converted to beta-paxitriol via C-10 ketoreduction by the short-chain dehydrogenase PC-15 which can be monoprenylated at the C-20 by the indole diterpene prenyltransferase penD. A two-step elimination (acetylation and elimination) process performed by the O-acetyltransferase PC-16 and the P.simplicissimum ptmI-ortholog not yet identified in P.crustosum, leads to the production of the prenylated form of penijanthine. The FAD-linked oxidoreductase ptmO then converts the prenylated form of penijanthine into PC-M5 which is in turn transformed into PC-M4 by the aromatic dimethylallyltransferase PC-22. A series of oxidation steps involving 4 cytochrome P450 monooxygenases (PC-21, PC-05, PC-23, PC-20) and a FAD-dependent monooxygenase (PC-14) are required for the transformation of PC-M4 to penitrems A and E. Synthesis of these final products is proposed to proceed via penitrems D and C (PC-21, PC-05, PC-14) and penitrems B and F (PC-21, PC-05, PC-14, PC-23). The polypeptide is Monooxygenase PC-14 (Penicillium crustosum (Blue mold fungus)).